We begin with the raw amino-acid sequence, 770 residues long: Disabled homolog 2 (770 aa).

A compositionally biased stretch (polar residues) spans 1 to 16; it reads MSNEVETSATNGQPDQ. The disordered stretch occupies residues 1 to 38; it reads MSNEVETSATNGQPDQQAAPKAPSKKEKKKGPEKTDEY. The residue at position 2 (serine 2) is an N-acetylserine. Phosphoserine is present on serine 2. A PID domain is found at 45–196; that stretch reads GDGVKYKAKL…KAVENGSEAL (152 aa). Tyrosine 170 carries the post-translational modification Phosphotyrosine. Serine 193 bears the Phosphoserine mark. The tract at residues 230–447 is required for localization to clathrin-coated pits; the sequence is ESKDILLVDL…KPGRGRRTAK (218 aa). Disordered regions lie at residues 284 to 482 and 604 to 629; these read LNFF…LQPN and VSTQPPSMHSSLLVTPPQPPPRAGPP. 2 short sequence motifs (DPF) span residues 293–295 and 298–300; these read DPF. A compositionally biased stretch (polar residues) spans 302-313; the sequence is QPDQSTPSSFDS. Phosphoserine; in mitosis occurs at positions 326 and 328. The span at 366-396 shows a compositional bias: polar residues; it reads FSSSQTQPAVRTQNGVSEREQNGFSVKSSPN. Serine 401 bears the Phosphoserine mark. Polar residues-rich tracts occupy residues 407–425, 466–480, and 604–616; these read SIQNGVKQDLESSVQSSPH, PSGQASPTGQPTALQ, and VSTQPPSMHSSLL. A sufficient for interaction with GRB2 region spans residues 604 to 732; sequence VSTQPPSMHS…SLPVTKSTDN (129 aa). Residues 619–627 form a required for interaction with CSK region; the sequence is PPQPPPRAG. The segment at 649-770 is required for interaction with MYO6; that stretch reads KDVKEMFKDF…YRDPFGNPFA (122 aa). The segment at 663–671 is required for interaction with GRB2 and CSK; sequence PPAVPARKG. Phosphoserine is present on residues serine 675, serine 723, and serine 729. The sufficient for interaction with SH3KBP1 SH3 domain stretch occupies residues 709–725; it reads NKINEPPKPAPRQVSLP. The disordered stretch occupies residues 742 to 770; it reads SFGSSQASVASSQPVSSEMYRDPFGNPFA. Over residues 745–758 the composition is skewed to low complexity; the sequence is SSQASVASSQPVSS.

In terms of assembly, interacts (via NPXY motif) with DAB2 (via PID domain). Can interact (via PID domain) with LDLR, APP, APLP1 and APLP2, and weakly with INPP5D (via NPXY motifs); the interaction is impaired by tyrosine phosphorylation of the respective NPXY motifs. Can weakly interact (via PID domain) with LRP1 (via NPXY motif); the interaction is enhanced by tyrosine phosphorylation of the NPXY motif. Interacts with LRP2 (via NPXY motif); the interaction is not affected by tyrosine phosphorylation of the NPXY motif. Interacts with clathrin; in vitro can assemble clathrin triskelia into polyhedral coats. Interacts with AP2A2, ITGB1, ITGB3, ITGB5, PIAS2, DAB2IP, NOSTRIN, FCHO1, DVL3, EPS15, ITSN1 and EPS15L1. Interacts with SH3KBP1 (via SH3 domains). Interacts with GRB2; competes with SOS1 for binding to GRB2 and the interaction is enhanced by EGF and NT-3 stimulation. Interacts with MAP3K7; the interaction is induced by TGF-beta stimulation and may mediate TGF-beta stimulated JNK activation. Interacts with AXIN1 and PPP1CA; the interactions are mutually exclusive. Interacts with the globular tail of MYO6. Interacts (via DPF motifs) with FCHO2; the interaction is direct and required for DAB2-mediated LDLR endocytosis. Interacts with LRP6; the interaction involves LRP6 phosphorylation by CK2 and sequesters LRP6 towards clathrin-mediated endocytosis. Associates with the TGF-beta receptor complex. Interacts with SMAD2 and SMAD3; the interactions are enhanced upon TGF-beta stimulation. Interacts with GRB2; the interaction is enhanced by EGF and NT-3 stimulation. Interacts with SRC; the interaction is enhanced by EGF stimulation. In terms of processing, phosphorylated. Phosphorylation during mitosis is leading to membrane displacement. Expressed in deep invaginations, inclusion cysts and the surface epithelial cells of the ovary. Also expressed in breast epithelial cells, spleen, thymus, prostate, testis, macrophages, fibroblasts, lung epithelial cells, placenta, brain stem, heart and small intestine. Expressed in kidney proximal tubular epithelial cells (at protein level).

Its subcellular location is the cytoplasm. The protein localises to the cytoplasmic vesicle. It is found in the clathrin-coated vesicle membrane. The protein resides in the membrane. It localises to the clathrin-coated pit. Adapter protein that functions as a clathrin-associated sorting protein (CLASP) required for clathrin-mediated endocytosis of selected cargo proteins. Can bind and assemble clathrin, and binds simultaneously to phosphatidylinositol 4,5-bisphosphate (PtdIns(4,5)P2) and cargos containing non-phosphorylated NPXY internalization motifs, such as the LDL receptor, to recruit them to clathrin-coated pits. Can function in clathrin-mediated endocytosis independently of the AP-2 complex. Involved in endocytosis of integrin beta-1; this function seems to redundant with the AP-2 complex and seems to require DAB2 binding to endocytosis accessory EH domain-containing proteins such as EPS15, EPS15L1 and ITSN1. Involved in endocytosis of cystic fibrosis transmembrane conductance regulator/CFTR. Involved in endocytosis of megalin/LRP2 lipoprotein receptor during embryonal development. Required for recycling of the TGF-beta receptor. Involved in CFTR trafficking to the late endosome. Involved in several receptor-mediated signaling pathways. Involved in TGF-beta receptor signaling and facilitates phosphorylation of the signal transducer SMAD2. Mediates TFG-beta-stimulated JNK activation. May inhibit the canoniocal Wnt/beta-catenin signaling pathway by stabilizing the beta-catenin destruction complex through a competing association with axin preventing its dephosphorylation through protein phosphatase 1 (PP1). Sequesters LRP6 towards clathrin-mediated endocytosis, leading to inhibition of Wnt/beta-catenin signaling. May activate non-canonical Wnt signaling. In cell surface growth factor/Ras signaling pathways proposed to inhibit ERK activation by interrupting the binding of GRB2 to SOS1 and to inhibit SRC by preventing its activating phosphorylation at 'Tyr-419'. Proposed to be involved in modulation of androgen receptor (AR) signaling mediated by SRC activation; seems to compete with AR for interaction with SRC. Plays a role in the CSF-1 signal transduction pathway. Plays a role in cellular differentiation. Involved in cell positioning and formation of visceral endoderm (VE) during embryogenesis and proposed to be required in the VE to respond to Nodal signaling coming from the epiblast. Required for the epithelial to mesenchymal transition, a process necessary for proper embryonic development. May be involved in myeloid cell differentiation and can induce macrophage adhesion and spreading. May act as a tumor suppressor. In Homo sapiens (Human), this protein is Disabled homolog 2 (DAB2).